Reading from the N-terminus, the 394-residue chain is Phosphoglycerate kinase (394 aa).

Substrate contacts are provided by residues 21-23 (DFN), Arg36, 59-62 (HLGR), Arg118, and Arg151. Phosphoserine is present on Ser183. ATP contacts are provided by Lys201 and Gly292. Thr299 carries the phosphothreonine modification. ATP-binding positions include Glu323 and 350 to 353 (GGDS).

This sequence belongs to the phosphoglycerate kinase family. As to quaternary structure, monomer.

It localises to the cytoplasm. It catalyses the reaction (2R)-3-phosphoglycerate + ATP = (2R)-3-phospho-glyceroyl phosphate + ADP. The protein operates within carbohydrate degradation; glycolysis; pyruvate from D-glyceraldehyde 3-phosphate: step 2/5. The chain is Phosphoglycerate kinase from Bacillus thuringiensis subsp. konkukian (strain 97-27).